Here is a 985-residue protein sequence, read N- to C-terminus: Disease resistance protein At4g27190 (985 aa).

The stretch at 24–88 (ANAIKFKSNV…ISKARLKLEE (65 aa)) forms a coiled coil. The region spanning 167–429 (IGVWGMGGVG…MAEGFMEELG (263 aa)) is the NB-ARC domain. 171 to 178 (GMGGVGKT) is an ATP binding site. LRR repeat units follow at residues 502–523 (SLRR…VEEF), 526–547 (KTSV…GFLQ), 551–572 (TLRI…SLLR), 575–597 (SLHS…ETLA), 598–620 (KLEL…EELK), and 621–643 (RFRH…VVSR).

It belongs to the disease resistance NB-LRR family.

In terms of biological role, disease resistance protein. The sequence is that of Disease resistance protein At4g27190 from Arabidopsis thaliana (Mouse-ear cress).